The chain runs to 257 residues: Phosphonates import ATP-binding protein PhnC 1 (257 aa).

In terms of domain architecture, ABC transporter spans 2-246; that stretch reads LKITNLTKRY…EMDTIYAGVP (245 aa). 35 to 42 contributes to the ATP binding site; that stretch reads GSSGAGKS.

The protein belongs to the ABC transporter superfamily. Phosphonates importer (TC 3.A.1.9.1) family. In terms of assembly, the complex is composed of two ATP-binding proteins (PhnC), two transmembrane proteins (PhnE) and a solute-binding protein (PhnD).

It is found in the cell inner membrane. It carries out the reaction phosphonate(out) + ATP + H2O = phosphonate(in) + ADP + phosphate + H(+). In terms of biological role, part of the ABC transporter complex PhnCDE involved in phosphonates import. Responsible for energy coupling to the transport system. In Ruegeria sp. (strain TM1040) (Silicibacter sp.), this protein is Phosphonates import ATP-binding protein PhnC 1.